The primary structure comprises 488 residues: Kelch-like protein 15 (488 aa).

The region spanning 31-98 (LDVTLVIEDH…MYYGTIELSM (68 aa)) is the BTB domain. The BACK domain occupies 133–237 (CAEIMRLLDD…TPSSVFEKVK (105 aa)). Kelch repeat units follow at residues 328 to 379 (FVFL…VIGR), 381 to 426 (VYAV…VLGN), and 428 to 473 (LYIT…NKCK).

Homodimer. Interacts with CUL3.

Its subcellular location is the nucleus. The protein operates within protein modification; protein ubiquitination. Substrate-specific adapter for CUL3 E3 ubiquitin-protein ligase complex. In Gallus gallus (Chicken), this protein is Kelch-like protein 15 (KLHL15).